The sequence spans 258 residues: Imidazole glycerol phosphate synthase subunit HisF (258 aa).

Catalysis depends on residues D11 and D130.

It belongs to the HisA/HisF family. Heterodimer of HisH and HisF.

Its subcellular location is the cytoplasm. The enzyme catalyses 5-[(5-phospho-1-deoxy-D-ribulos-1-ylimino)methylamino]-1-(5-phospho-beta-D-ribosyl)imidazole-4-carboxamide + L-glutamine = D-erythro-1-(imidazol-4-yl)glycerol 3-phosphate + 5-amino-1-(5-phospho-beta-D-ribosyl)imidazole-4-carboxamide + L-glutamate + H(+). It participates in amino-acid biosynthesis; L-histidine biosynthesis; L-histidine from 5-phospho-alpha-D-ribose 1-diphosphate: step 5/9. IGPS catalyzes the conversion of PRFAR and glutamine to IGP, AICAR and glutamate. The HisF subunit catalyzes the cyclization activity that produces IGP and AICAR from PRFAR using the ammonia provided by the HisH subunit. The protein is Imidazole glycerol phosphate synthase subunit HisF of Baumannia cicadellinicola subsp. Homalodisca coagulata.